The chain runs to 214 residues: MPSYTLHYFNHRGRARSAVCCSQLLVSSTMTADRVFRMGQHEKQDAMSHDANVGIGQQNPNSPEYAMARYLAREFGFHGRNNMEMARVDFISDCFYDILDDYMRMYQDGNCRMMFQRSRDMSSSSEKRMRFQETCRRILPFMERTLEMYNGGSQYFMGDQMTMADMMCYCALENPLMEEPSMLSSYPKLMALRNRVMNHSKMSSYLQRRCRTDF.

One can recognise a GST N-terminal domain in the interval 2–79 (PSYTLHYFNH…YLAREFGFHG (78 aa)). The GST C-terminal domain maps to 81-214 (NNMEMARVDF…YLQRRCRTDF (134 aa)).

The protein belongs to the GST superfamily. As to expression, lens.

In terms of biological role, S-crystallins are structural components of squids and octopi eye lens. Contains relatively little GST activity (1/1000 of that of mammalian GST enzyme). The polypeptide is S-crystallin 1 (OCTS1) (Octopus vulgaris (Common octopus)).